Here is a 229-residue protein sequence, read N- to C-terminus: UPF0758 protein CLH_0547 (229 aa).

In terms of domain architecture, MPN spans 107-229 (KIMSPNDIAM…FISLKEKGFI (123 aa)). Positions 178, 180, and 191 each coordinate Zn(2+). A JAMM motif motif is present at residues 178 to 191 (HNHPSGDPTPSKED).

It belongs to the UPF0758 family.

The polypeptide is UPF0758 protein CLH_0547 (Clostridium botulinum (strain Alaska E43 / Type E3)).